The following is a 194-amino-acid chain: MSDSFALIPLPLVDQRYAQALFDFVQEARSVENVEKAVASFLVVLDQHEDLKRFVQSPFFSIKEQIKVMRSVCENIKFADQGAGQILSNFLRVITVNRRLCALSGILQAFQHRVALSRREVSAQIISARPLSSHQEEELRVALEGVVRGKVLLHMCVDPTILGGLIIRLGSSQIDTSLVTKLSSLKLALKKEVS.

Belongs to the ATPase delta chain family. As to quaternary structure, F-type ATPases have 2 components, F(1) - the catalytic core - and F(0) - the membrane proton channel. F(1) has five subunits: alpha(3), beta(3), gamma(1), delta(1), epsilon(1). F(0) has three main subunits: a(1), b(2) and c(10-14). The alpha and beta chains form an alternating ring which encloses part of the gamma chain. F(1) is attached to F(0) by a central stalk formed by the gamma and epsilon chains, while a peripheral stalk is formed by the delta and b chains.

Its subcellular location is the cell inner membrane. In terms of biological role, f(1)F(0) ATP synthase produces ATP from ADP in the presence of a proton or sodium gradient. F-type ATPases consist of two structural domains, F(1) containing the extramembraneous catalytic core and F(0) containing the membrane proton channel, linked together by a central stalk and a peripheral stalk. During catalysis, ATP synthesis in the catalytic domain of F(1) is coupled via a rotary mechanism of the central stalk subunits to proton translocation. Its function is as follows. This protein is part of the stalk that links CF(0) to CF(1). It either transmits conformational changes from CF(0) to CF(1) or is implicated in proton conduction. In Bartonella quintana (strain Toulouse) (Rochalimaea quintana), this protein is ATP synthase subunit delta.